The primary structure comprises 157 residues: Protein GrpE (157 aa).

A compositionally biased stretch (basic and acidic residues) spans 1–10; that stretch reads MQEENQHPEQ. Residues 1–21 form a disordered region; that stretch reads MQEENQHPEQDDISEAQDAGA.

It belongs to the GrpE family. In terms of assembly, homodimer.

It localises to the cytoplasm. Its function is as follows. Participates actively in the response to hyperosmotic and heat shock by preventing the aggregation of stress-denatured proteins, in association with DnaK and GrpE. It is the nucleotide exchange factor for DnaK and may function as a thermosensor. Unfolded proteins bind initially to DnaJ; upon interaction with the DnaJ-bound protein, DnaK hydrolyzes its bound ATP, resulting in the formation of a stable complex. GrpE releases ADP from DnaK; ATP binding to DnaK triggers the release of the substrate protein, thus completing the reaction cycle. Several rounds of ATP-dependent interactions between DnaJ, DnaK and GrpE are required for fully efficient folding. In Methylovorus sp. (strain SS1 / DSM 11726), this protein is Protein GrpE.